A 1144-amino-acid polypeptide reads, in one-letter code: Formin-like protein 18 (1144 aa).

The Phosphatase tensin-type domain maps to 17-193; sequence LEISERVYVF…QYISRRNVGS (177 aa). The active-site Phosphocysteine intermediate is C126. In terms of domain architecture, C2 tensin-type spans 199–338; sequence DQALTLDCVN…FSAEVIFSEM (140 aa). Disordered stretches follow at residues 429-463 and 482-729; these read ISEN…SILK and KIFS…KGRG. A compositionally biased stretch (basic and acidic residues) spans 441 to 450; it reads SPEKEKDTMS. The span at 491–522 shows a compositional bias: polar residues; sequence SPVTSPLPNRSPTQGSPASISRFHSSPSSLGI. The span at 526 to 536 shows a compositional bias: basic and acidic residues; that stretch reads LHDHGSCKDEE. Residues 538–548 show a composition bias toward low complexity; it reads TSSSPASPSIS. Over residues 555–580 the composition is skewed to polar residues; that stretch reads PLTSSQPKKASPQCPQSPTPVHSNGP. Over residues 603-613 the composition is skewed to pro residues; that stretch reads RPPPPPPPPPI. Positions 614 to 629 are enriched in low complexity; that stretch reads SSLRSTPSPSSTSNSI. Residues 633–643 are compositionally biased toward pro residues; the sequence is GPPPPPPPPPL. Low complexity predominate over residues 644–653; that stretch reads QSHRSALSSS. Positions 669–678 are enriched in pro residues; sequence NPPPPPPPPL. A compositionally biased stretch (low complexity) spans 679–695; it reads HSNSRMGAPTSSLVLKS. Positions 696–705 are enriched in pro residues; it reads PPVPPPPAPA. Positions 735–1135 constitute an FH2 domain; it reads KGQGQTRKAN…RAQKEAENEK (401 aa).

Belongs to the formin-like family. Class-II subfamily.

This chain is Formin-like protein 18 (FH18), found in Arabidopsis thaliana (Mouse-ear cress).